A 526-amino-acid polypeptide reads, in one-letter code: Probable carboxypeptidase 2 (526 aa).

Residues 1-21 form the signal peptide; sequence MVAYRLLALISLGLGSHCASA. An N-linked (GlcNAc...) asparagine glycan is attached at asparagine 46. Residues 53-76 are disordered; it reads PAFTSPGTVPRGFSDGTSGPTRDE. The Peptidase M14 domain maps to 71–351; sequence GPTRDETMEG…VMAKSILQTA (281 aa). Residue asparagine 116 is glycosylated (N-linked (GlcNAc...) asparagine). Zn(2+) is bound by residues histidine 136, glutamate 139, and histidine 224. Residue glutamate 322 is the Proton donor/acceptor of the active site. N-linked (GlcNAc...) asparagine glycans are attached at residues asparagine 393 and asparagine 459.

The protein belongs to the peptidase M14 family. Zn(2+) serves as cofactor.

The protein localises to the secreted. Extracellular metalloprotease that contributes to pathogenicity. The polypeptide is Probable carboxypeptidase 2 (MCPB) (Arthroderma benhamiae (strain ATCC MYA-4681 / CBS 112371) (Trichophyton mentagrophytes)).